A 567-amino-acid chain; its full sequence is Nucleolus and neural progenitor protein (567 aa).

Serine 265 is modified (phosphoserine). The segment at 437–457 (SKHHLRQRRSQNKFLRRQRKP) is disordered. The nuclear localization signal stretch occupies residues 442–460 (RQRRSQNKFLRRQRKPQRK).

Belongs to the nepro family.

The protein localises to the nucleus. It is found in the nucleolus. May play a role in cortex development as part of the Notch signaling pathway. Downstream of Notch may repress the expression of proneural genes and inhibit neuronal differentiation thereby maintaining neural progenitors. May also play a role in preimplentation embryo development. The chain is Nucleolus and neural progenitor protein from Homo sapiens (Human).